Consider the following 123-residue polypeptide: Large ribosomal subunit protein bL19c (123 aa).

It belongs to the bacterial ribosomal protein bL19 family.

It localises to the plastid. Its subcellular location is the chloroplast. This is Large ribosomal subunit protein bL19c (rpl19) from Porphyra purpurea (Red seaweed).